The sequence spans 356 residues: S-adenosylmethionine:tRNA ribosyltransferase-isomerase (356 aa).

The protein belongs to the QueA family. In terms of assembly, monomer.

Its subcellular location is the cytoplasm. The enzyme catalyses 7-aminomethyl-7-carbaguanosine(34) in tRNA + S-adenosyl-L-methionine = epoxyqueuosine(34) in tRNA + adenine + L-methionine + 2 H(+). It functions in the pathway tRNA modification; tRNA-queuosine biosynthesis. Its function is as follows. Transfers and isomerizes the ribose moiety from AdoMet to the 7-aminomethyl group of 7-deazaguanine (preQ1-tRNA) to give epoxyqueuosine (oQ-tRNA). In Escherichia coli (strain ATCC 8739 / DSM 1576 / NBRC 3972 / NCIMB 8545 / WDCM 00012 / Crooks), this protein is S-adenosylmethionine:tRNA ribosyltransferase-isomerase.